Reading from the N-terminus, the 195-residue chain is SXP/RAL-2-like protein 2 (195 aa).

The segment at 162–195 (EKVHGGSHGGLRGGPGGPRDGPRGGPRGGPRGGR) is disordered. Residues 167–195 (GSHGGLRGGPGGPRDGPRGGPRGGPRGGR) show a composition bias toward gly residues.

It belongs to the SXP/RAL-2 family.

This is SXP/RAL-2-like protein 2 from Caenorhabditis elegans.